Reading from the N-terminus, the 260-residue chain is Exosome complex component Rrp42 (260 aa).

Belongs to the RNase PH family. Rrp42 subfamily. In terms of assembly, component of the archaeal exosome complex. Forms a hexameric ring-like arrangement composed of 3 Rrp41-Rrp42 heterodimers. The hexameric ring associates with a trimer of Rrp4 and/or Csl4 subunits.

It is found in the cytoplasm. In terms of biological role, non-catalytic component of the exosome, which is a complex involved in RNA degradation. Contributes to the structuring of the Rrp41 active site. The chain is Exosome complex component Rrp42 from Thermoplasma acidophilum (strain ATCC 25905 / DSM 1728 / JCM 9062 / NBRC 15155 / AMRC-C165).